The primary structure comprises 147 residues: Hemoglobin subunit epsilon (147 aa).

The region spanning 3–147 is the Globin domain; sequence HFTAEEKSTI…VATALAHKYH (145 aa). Serine 14 and serine 51 each carry phosphoserine. Residues histidine 64 and histidine 93 each contribute to the heme b site.

It belongs to the globin family. In terms of assembly, heterotetramer of two alpha chains and two epsilon chains in early embryonic hemoglobin Gower-2; two zeta chains and two epsilon chains in early embryonic hemoglobin Gower-1. As to expression, red blood cells.

In terms of biological role, the epsilon chain is a beta-type chain of early mammalian embryonic hemoglobin. This Propithecus verreauxi (White sifaka) protein is Hemoglobin subunit epsilon (HBE1).